Here is a 159-residue protein sequence, read N- to C-terminus: Cyclic pyranopterin monophosphate synthase (159 aa).

Residues 76–78 and 114–115 each bind substrate; these read LCH and ME. Asp-129 is a catalytic residue.

This sequence belongs to the MoaC family. Homohexamer; trimer of dimers.

It catalyses the reaction (8S)-3',8-cyclo-7,8-dihydroguanosine 5'-triphosphate = cyclic pyranopterin phosphate + diphosphate. It participates in cofactor biosynthesis; molybdopterin biosynthesis. In terms of biological role, catalyzes the conversion of (8S)-3',8-cyclo-7,8-dihydroguanosine 5'-triphosphate to cyclic pyranopterin monophosphate (cPMP). This is Cyclic pyranopterin monophosphate synthase from Psychromonas ingrahamii (strain DSM 17664 / CCUG 51855 / 37).